We begin with the raw amino-acid sequence, 86 residues long: Actinorhodin polyketide synthase acyl carrier protein (86 aa).

The region spanning 4–82 is the Carrier domain; the sequence is LLTTDDLRRA…ELLDLINGAL (79 aa). Ser-42 is subject to O-(pantetheine 4'-phosphoryl)serine.

Post-translationally, 4'-phosphopantetheine is transferred from CoA to a specific serine of the apo-ACP-like protein.

It participates in antibiotic biosynthesis; actinorhodin biosynthesis. Acyl carrier protein. This Streptomyces coelicolor (strain ATCC BAA-471 / A3(2) / M145) protein is Actinorhodin polyketide synthase acyl carrier protein.